A 1905-amino-acid polypeptide reads, in one-letter code: Low-density lipoprotein receptor-related protein 4 (1905 aa).

The N-terminal stretch at 1–20 is a signal peptide; sequence MRRWWGALLLGALLCAHGTA. The Extracellular portion of the chain corresponds to 21-1723; that stretch reads SNLECACGRS…VPAAPGEGLH (1703 aa). LDL-receptor class A domains are found at residues 26–67, 70–106, 109–144, 147–183, 190–226, 230–266, 269–305, and 311–350; these read ACGR…DGCT, TCSP…QDCP, ECEE…EQCD, KCSD…ESCP, PCNL…SDCS, PCRS…RNCT, MCTA…ENCE, and QCAS…QNCR. Intrachain disulfides connect cysteine 27–cysteine 44, cysteine 34–cysteine 57, cysteine 51–cysteine 66, cysteine 71–cysteine 83, cysteine 78–cysteine 96, cysteine 90–cysteine 105, cysteine 110–cysteine 122, cysteine 117–cysteine 135, cysteine 129–cysteine 143, cysteine 148–cysteine 160, cysteine 155–cysteine 173, cysteine 167–cysteine 182, cysteine 191–cysteine 203, cysteine 198–cysteine 216, cysteine 210–cysteine 225, cysteine 231–cysteine 243, cysteine 238–cysteine 256, cysteine 250–cysteine 265, cysteine 270–cysteine 282, cysteine 277–cysteine 295, cysteine 289–cysteine 304, cysteine 312–cysteine 324, cysteine 319–cysteine 337, cysteine 331–cysteine 349, cysteine 358–cysteine 369, cysteine 365–cysteine 378, cysteine 380–cysteine 393, cysteine 399–cysteine 409, cysteine 405–cysteine 418, and cysteine 420–cysteine 433. Asparagine 264 carries an N-linked (GlcNAc...) asparagine glycan. The EGF-like 1; atypical domain occupies 354 to 394; that stretch reads GEENCNVNNGGCAQKCQMIRGAVQCTCHTGYRLTEDGRTCQ. An EGF-like 2; calcium-binding domain is found at 395-434; it reads DVNECAEEGYCSQGCTNSEGAFQCWCEAGYELRPDRRSCK. 5 LDL-receptor class B repeats span residues 480–522, 523–565, 566–609, 610–652, and 653–693; these read ELVF…DWVH, DKLY…HPME, GTIY…DYAG, RRMY…FEDS, and LYWT…LHPQ. Asparagine 498 is a glycosylation site (N-linked (GlcNAc...) asparagine). An EGF-like 3 domain is found at 698-737; sequence GKNRCGDNNGGCTHLCLPSGQNYTCACPTGFRKINSHACA. 3 disulfides stabilise this stretch: cysteine 702–cysteine 713, cysteine 709–cysteine 722, and cysteine 724–cysteine 736. An N-linked (GlcNAc...) asparagine glycan is attached at asparagine 719. 5 LDL-receptor class B repeats span residues 785-827, 828-870, 871-914, 915-956, and 957-998; these read DHVY…DWVT, NKLY…EPMG, GYMY…DYGS, QRLY…LYGQ, and RIYW…FHRQ. N-linked (GlcNAc...) asparagine glycosylation occurs at asparagine 901. Asparagine 1077 carries an N-linked (GlcNAc...) asparagine glycan. LDL-receptor class B repeat units follow at residues 1093 to 1135, 1136 to 1178, 1179 to 1222, 1223 to 1263, 1264 to 1306, 1397 to 1439, 1440 to 1482, 1483 to 1526, 1527 to 1568, and 1569 to 1610; these read GKVY…DAIG, RKVY…YHEM, GFMY…DKTS, SQLL…LLDS, YIYW…DRAQ, GKVY…DWVA, RNLY…FPRK, GYLF…DYDT, RRIY…QDRW, and IYWT…SPQR. Residues asparagine 1415 and asparagine 1467 are each glycosylated (N-linked (GlcNAc...) asparagine). Residues 1659 to 1696 form a disordered region; that stretch reads PRATSLNEKSPVLPNTLPTTLHSSTTRTRTSPEGAEGR. Positions 1671 to 1690 are enriched in low complexity; sequence LPNTLPTTLHSSTTRTRTSP. Residues 1724 to 1746 traverse the membrane as a helical segment; sequence VSYAVGGLLSVLLILLVTAALML. Residues 1747-1905 lie on the Cytoplasmic side of the membrane; it reads YRHRKSKFTD…ERKLSSESQV (159 aa). A disordered region spans residues 1853-1905; it reads SSGSLDDTETEQLLQEEQSECSSVHTATTPERRGSLPDTGWKHERKLSSESQV. The segment covering 1872-1881 has biased composition (polar residues); the sequence is ECSSVHTATT. A compositionally biased stretch (basic and acidic residues) spans 1882-1905; sequence PERRGSLPDTGWKHERKLSSESQV.

This sequence belongs to the LDLR family. As to quaternary structure, homooligomer. Interacts with MUSK; the heterodimer forms an AGRIN receptor complex that binds AGRIN resulting in activation of MUSK. Interacts (via the extracellular domain) with SOST; the interaction facilitates the inhibition of Wnt signaling. Interacts with MESD; the interaction promotes glycosylation of LRP4 and its cell-surface expression. N-glycosylation is required for cell surface location. In terms of tissue distribution, expressed in different regions of the brain, mainly in the olfactory bulb, at lower level in the cerebral cortex and hippocampus.

The protein localises to the cell membrane. Functionally, mediates SOST-dependent inhibition of bone formation. Functions as a specific facilitator of SOST-mediated inhibition of Wnt signaling. Plays a key role in the formation and the maintenance of the neuromuscular junction (NMJ), the synapse between motor neuron and skeletal muscle. Directly binds AGRIN and recruits it to the MUSK signaling complex. Mediates the AGRIN-induced phosphorylation of MUSK, the kinase of the complex. The activation of MUSK in myotubes induces the formation of NMJ by regulating different processes including the transcription of specific genes and the clustering of AChR in the postsynaptic membrane. Alternatively, may be involved in the negative regulation of the canonical Wnt signaling pathway, being able to antagonize the LRP6-mediated activation of this pathway. More generally, has been proposed to function as a cell surface endocytic receptor binding and internalizing extracellular ligands for degradation by lysosomes. Plays an essential role in the process of digit differentiation. The chain is Low-density lipoprotein receptor-related protein 4 (Lrp4) from Rattus norvegicus (Rat).